A 396-amino-acid chain; its full sequence is MLGFLSARQTGLEDPLRLRRAESTRRVLGLELNKDRDVERIHGGGINTLDIEPVEGRYMLSGGSDGVIVLYDLENSSRQSYYTCKAVCSIGRDHPDVHRYSVETVQWYPHDTGMFTSSSFDKTLKVWDTNTLQTADVFNFEETVYSHHMSPVSTKHCLVAVGTRGPKVQLCDLKSGSCSHILQGHRQEILAVSWSPRYDYILATASADSRVKLWDVRRASGCLITLDQHNGKKSQAVESANTAHNGKVNGLCFTSDGLHLLTVGTDNRMRLWNSSNGENTLVNYGKVCNNSKKGLKFTVSCGCSSEFVFVPYGSTIAVYTVYSGEQITMLKGHYKTVDCCVFQSNFQELYSGSRDCNILAWVPSLYEPVPDDDETTTKSQLNPAFEDAWSSSDEEG.

WD repeat units lie at residues 33 to 73 (NKDR…LYDL), 88 to 129 (CSIG…VWDT), 133 to 173 (QTAD…LCDL), 177 to 216 (SCSH…LWDV), 235 to 274 (QAVE…LWNS), 281 to 321 (LVNY…VYTV), and 325 to 363 (EQIT…AWVP). The segment at 371–396 (DDDETTTKSQLNPAFEDAWSSSDEEG) is disordered. A phosphoserine mark is found at Ser-390, Ser-391, and Ser-392.

As to quaternary structure, part of the CSA complex (also named DCX(ERCC8) complex), a DCX E3 ubiquitin-protein ligase complex containing ERCC8, RBX1, DDB1 and CUL4A; the CSA complex interacts with RNA polymerase II; upon UV irradiation it interacts with the COP9 signalosome and preferentially with the hyperphosphorylated form of RNA polymerase II. Interacts with ERCC6/CSB (via CIM motif); promoting recruitment to lesion-stalled RNA polymerase II (Pol II). Interacts with KIAA1530/UVSSA. Interacts with a subunit of RNA polymerase II TFIIH.

Its subcellular location is the nucleus. It localises to the chromosome. The protein resides in the nucleus matrix. Its pathway is protein modification; protein ubiquitination. In terms of biological role, substrate-recognition component of the CSA complex, a DCX (DDB1-CUL4-X-box) E3 ubiquitin-protein ligase complex, involved in transcription-coupled nucleotide excision repair (TC-NER), a process during which RNA polymerase II-blocking lesions are rapidly removed from the transcribed strand of active genes. Following recruitment to lesion-stalled RNA polymerase II (Pol II), the CSA complex mediates ubiquitination of Pol II subunit POLR2A/RPB1 at 'Lys-1268', a critical TC-NER checkpoint, governing RNA Pol II stability and initiating DNA damage excision by TFIIH recruitment. The CSA complex also promotes the ubiquitination and subsequent proteasomal degradation of ERCC6/CSB in a UV-dependent manner; ERCC6 degradation is essential for the recovery of RNA synthesis after transcription-coupled repair. Also plays a role in DNA double-strand breaks (DSSBs) repair by non-homologous end joining (NHEJ). This chain is DNA excision repair protein ERCC-8, found in Homo sapiens (Human).